The sequence spans 1218 residues: Coatomer subunit alpha-3 (1218 aa).

9 WD repeats span residues 7–48, 49–88, 91–132, 133–172, 202–241, 246–285, 288–326, 363–404, and 450–489; these read TKSN…DRFD, EHDGPVRGVHFHATQPLFVSGGDDYKIKVWNYKTHRCLFT, GHLD…AVLT, GHNHYVMCASFHPKEDLVVSASLDQTVRVWDIGALRKKTV, GHDRGVNWASFHPTLPLIVSGADDRQVKLWRMNDTKAWEV, GHMNNVSCVMFHAKQDIIVSNSEDKSIRVWDATKRTGIQT, REHDRFWILAAHPEMNLLAAGHDNGMIVFKLERERPAFS, SLNQ…AGRT, and PLPIAMDAIYYAGTGNLLCKAEDRVTIFDLQQRLILGELQ. Residues 854–893 are disordered; it reads AMANGGDGFDAEEGEANEEDGEEGGWDLEDLELPPEAETP. The span at 862–888 shows a compositional bias: acidic residues; that stretch reads FDAEEGEANEEDGEEGGWDLEDLELPP.

In terms of assembly, oligomeric complex that consists of at least the alpha, beta, beta', gamma, delta, epsilon and zeta subunits.

It is found in the cytoplasm. The protein resides in the golgi apparatus membrane. It localises to the cytoplasmic vesicle. Its subcellular location is the COPI-coated vesicle membrane. In terms of biological role, the coatomer is a cytosolic protein complex that binds to dilysine motifs and reversibly associates with Golgi non-clathrin-coated vesicles, which further mediate biosynthetic protein transport from the ER, via the Golgi up to the trans Golgi network. Coatomer complex is required for budding from Golgi membranes, and is essential for the retrograde Golgi-to-ER transport of dilysine-tagged proteins. This Oryza sativa subsp. japonica (Rice) protein is Coatomer subunit alpha-3.